Here is a 180-residue protein sequence, read N- to C-terminus: Large ribosomal subunit protein uL6 (180 aa).

Belongs to the universal ribosomal protein uL6 family. As to quaternary structure, part of the 50S ribosomal subunit.

In terms of biological role, this protein binds to the 23S rRNA, and is important in its secondary structure. It is located near the subunit interface in the base of the L7/L12 stalk, and near the tRNA binding site of the peptidyltransferase center. The chain is Large ribosomal subunit protein uL6 from Borrelia hermsii (strain HS1 / DAH).